Reading from the N-terminus, the 227-residue chain is GFP-like non-fluorescent chromoprotein (227 aa).

The segment at residues 63-65 (AYG) is a cross-link (5-imidazolinone (Ala-Gly)). Tyr-64 is modified (2,3-didehydrotyrosine).

This sequence belongs to the GFP family. As to quaternary structure, homotetramer. Contains a chromophore consisting of modified amino acid residues. The chromophore is formed by autocatalytic backbone condensation between Xaa-N and Gly-(N+2), and oxidation of Tyr-(N+1) to didehydrotyrosine. Maturation of the chromophore requires nothing other than molecular oxygen. The precise stereochemistry of the tyrosine has not been determined.

Non-fluorescent pigment protein that is mauve in color. The wild-type form is non-fluorescent. In Condylactis gigantea (Giant Caribbean anemone), this protein is GFP-like non-fluorescent chromoprotein.